A 240-amino-acid chain; its full sequence is FAS1 domain-containing protein AN1527 (240 aa).

An N-terminal signal peptide occupies residues 1–24; that stretch reads MRQLSTTALVLFLFFYCSISTAWS. The FAS1 domain occupies 91–239; that stretch reads EPTISDVLPK…GEVWVIDGVI (149 aa).

It is found in the vacuole. The chain is FAS1 domain-containing protein AN1527 from Emericella nidulans (strain FGSC A4 / ATCC 38163 / CBS 112.46 / NRRL 194 / M139) (Aspergillus nidulans).